The following is a 373-amino-acid chain: Maltose/maltodextrin import ATP-binding protein MalK (373 aa).

An ABC transporter domain is found at 4-234 (VTLKNVCKAY…PQNRFVAGFI (231 aa)). 36 to 43 (GPSGCGKS) contributes to the ATP binding site.

The protein belongs to the ABC transporter superfamily. Maltooligosaccharide importer (TC 3.A.1.1.1) family. The complex is composed of two ATP-binding proteins (MalK), two transmembrane proteins (MalG and MalK) and a solute-binding protein (MalE).

The protein localises to the cell inner membrane. The enzyme catalyses D-maltose(out) + ATP + H2O = D-maltose(in) + ADP + phosphate + H(+). Its function is as follows. Part of the ABC transporter complex MalEFGK involved in maltose/maltodextrin import. Responsible for energy coupling to the transport system. This Vibrio cholerae serotype O1 (strain ATCC 39315 / El Tor Inaba N16961) protein is Maltose/maltodextrin import ATP-binding protein MalK.